The sequence spans 91 residues: Large ribosomal subunit protein bL31B (91 aa).

It belongs to the bacterial ribosomal protein bL31 family. Type B subfamily. In terms of assembly, part of the 50S ribosomal subunit.

The protein is Large ribosomal subunit protein bL31B of Mycolicibacterium vanbaalenii (strain DSM 7251 / JCM 13017 / BCRC 16820 / KCTC 9966 / NRRL B-24157 / PYR-1) (Mycobacterium vanbaalenii).